The primary structure comprises 844 residues: Janus kinase and microtubule-interacting protein 3 (844 aa).

The stretch at 8 to 258 (SRAKGDKAEA…QLSQVREADR (251 aa)) forms a coiled coil. The interval 250 to 290 (LSQVREADRHPGSPRRELPHAAGAGDASDHSGSPEQQLDEK) is disordered. The span at 254–268 (READRHPGSPRRELP) shows a compositional bias: basic and acidic residues. Positions 269-282 (HAAGAGDASDHSGS) are enriched in low complexity. The stretch at 289 to 421 (EKDARRFQLK…DELSKTLETA (133 aa)) forms a coiled coil. A Phosphoserine modification is found at Ser384. Positions 466-483 (SDGSSVSYQTDRTDQTPC) are enriched in polar residues. A disordered region spans residues 466–489 (SDGSSVSYQTDRTDQTPCTPDDDL). 2 coiled-coil regions span residues 493–621 (MAKE…RERK) and 683–834 (VLTL…FLFL).

It belongs to the JAKMIP family. In terms of tissue distribution, specifically expressed in the CNS and endocrine tissues. Also detected in other tissues including heart, testis and prostate.

It localises to the golgi apparatus. The sequence is that of Janus kinase and microtubule-interacting protein 3 (JAKMIP3) from Homo sapiens (Human).